A 249-amino-acid polypeptide reads, in one-letter code: Uridylate kinase (249 aa).

Residue 21–24 participates in ATP binding; sequence KLSG. Position 63 (glycine 63) interacts with UMP. ATP-binding residues include glycine 64 and arginine 68. Residues aspartate 84 and 145–152 contribute to the UMP site; that span reads TGNPFVTT. Residues threonine 172, tyrosine 178, and aspartate 181 each contribute to the ATP site.

Belongs to the UMP kinase family. As to quaternary structure, homohexamer.

It localises to the cytoplasm. The enzyme catalyses UMP + ATP = UDP + ADP. Its pathway is pyrimidine metabolism; CTP biosynthesis via de novo pathway; UDP from UMP (UMPK route): step 1/1. With respect to regulation, inhibited by UTP. Catalyzes the reversible phosphorylation of UMP to UDP. The sequence is that of Uridylate kinase from Francisella tularensis subsp. holarctica (strain FTNF002-00 / FTA).